Reading from the N-terminus, the 617-residue chain is Neurosecretory protein VGF (617 aa).

A signal peptide spans 1–23 (MKTFTLPASVLFCFLLLIRGLGA). Disordered regions lie at residues 29 to 75 (SDVY…GELF), 94 to 113 (PASP…EEAA), 121 to 157 (VRSQ…DRSE), and 169 to 192 (LRDF…ETRT). Residues 48–64 (AVSRPKDDSVPEVRAAR) are compositionally biased toward basic and acidic residues. Acidic residues predominate over residues 148–157 (NDPEADDRSE). Q180 is subject to Pyrrolidone carboxylic acid. Residues 182-192 (ETAAAETETRT) show a composition bias toward low complexity. Pyrrolidone carboxylic acid is present on Q313. The segment at 348–603 (DLGGRGLQET…AEERRLQEQE (256 aa)) is disordered. A compositionally biased stretch (acidic residues) spans 378-397 (EDEVGEEDEEAAEAEAEAEE). Basic and acidic residues predominate over residues 418–436 (AEDKRSQEEAPGHRRKDAE). The residue at position 423 (S423) is a Phosphoserine. Residues 437–452 (GTEEGGEEDDDDEEMD) are compositionally biased toward acidic residues. The segment covering 491 to 501 (PPEPVPPPRAA) has biased composition (pro residues). The segment covering 577 to 601 (HHPDLEAQARRAQEEADAEERRLQE) has biased composition (basic and acidic residues).

In terms of assembly, interacts with HSPA8 on cell membrane. Interacts with C3AR1. Interacts with C1QBP. Multiple peptides are derived from VGF, with activities in synaptic plasticity, antidepression, penile erection, autonomic activation, and increases in energy expenditure. In terms of tissue distribution, central and peripheral nervous systems, synthesized exclusively in neuronal and neuroendocrine cells. VGF and several of the derived peptides are present in the brain.

It is found in the secreted. The protein localises to the cytoplasmic vesicle. The protein resides in the secretory vesicle. Secreted polyprotein that is packaged and proteolytically processed by prohormone convertases PCSK1 and PCSK2 in a cell-type-specific manner. VGF and peptides derived from its processing play many roles in neurogenesis and neuroplasticity associated with learning, memory, depression and chronic pain. Functionally, plays a role in the control of body fluid homeostasis by regulating vasopressin release. Suppresses presynaptic glutamatergic neurons connected to vasopressin neurons. In terms of biological role, plays a role in the control of body fluid homeostasis by regulating vasopressin release. Activates GABAergic interneurons which are inhibitory neurons of the nervous system and thereby suppresses presynaptic glutamatergic neurons. Also stimulates feeding behavior in an orexin-dependent manner in the hypothalamus. Functions as a positive regulator for the activation of orexin neurons resulting in elevated gastric acid secretion and gastric emptying. Its function is as follows. Secreted multifunctional neuropeptide that binds to different cell receptors and thereby plays multiple physiological roles including modulation of energy expenditure, pain, response to stress, gastric regulation, glucose homeostasis as well as lipolysis. Activates the G-protein-coupled receptor C3AR1 via a folding-upon-binding mechanism leading to enhanced lipolysis in adipocytes. Interacts with C1QBP receptor in macrophages and microglia causing increased levels of intracellular calcium and hypersensitivity. Plays a role in the regulation of memory formation and depression-related behaviors potentially by influencing synaptic plasticity and neurogenesis. Induces acute and transient activation of the NTRK2/TRKB receptor and subsequent CREB phosphorylation. Also induces insulin secretion in insulinoma cells by increasing intracellular calcium mobilization. The chain is Neurosecretory protein VGF (Vgf) from Rattus norvegicus (Rat).